The sequence spans 896 residues: Translation initiation factor IF-2 (896 aa).

Residues 49–310 are disordered; sequence LKKEHGDTSG…MQQGFDKSAT (262 aa). A compositionally biased stretch (polar residues) spans 57 to 66; the sequence is SGETEPTRLT. Composition is skewed to basic and acidic residues over residues 101 to 174, 184 to 240, and 250 to 263; these read STIE…KDMN, AKKE…KSAD, and REAEDAADKKDEKA. Positions 284–295 are enriched in basic residues; sequence RNQRGRGGKGKL. A tr-type G domain is found at 395 to 564; sequence GRAPVVTIMG…LLQSEVLELT (170 aa). A G1 region spans residues 404 to 411; that stretch reads GHVDHGKT. A GTP-binding site is contributed by 404–411; it reads GHVDHGKT. The segment at 429 to 433 is G2; sequence GITQH. Residues 450 to 453 form a G3 region; it reads DTPG. Residues 450–454 and 504–507 each bind GTP; these read DTPGH and NKID. The G4 stretch occupies residues 504–507; sequence NKID. Residues 540–542 form a G5 region; it reads SAK.

This sequence belongs to the TRAFAC class translation factor GTPase superfamily. Classic translation factor GTPase family. IF-2 subfamily.

It localises to the cytoplasm. One of the essential components for the initiation of protein synthesis. Protects formylmethionyl-tRNA from spontaneous hydrolysis and promotes its binding to the 30S ribosomal subunits. Also involved in the hydrolysis of GTP during the formation of the 70S ribosomal complex. The protein is Translation initiation factor IF-2 of Vibrio atlanticus (strain LGP32) (Vibrio splendidus (strain Mel32)).